A 632-amino-acid polypeptide reads, in one-letter code: Cleavage stimulation factor subunit 2 tau variant (632 aa).

An RRM domain is found at 16 to 94 (RSVFVGNIPY…RALRVDNAAS (79 aa)). Disordered regions lie at residues 201 to 296 (IPGK…PGGA) and 365 to 433 (YMGP…TRPM). Residues 213–233 (PGGPGPSGPGGPGPGPAPGLC) show a composition bias toward pro residues. Over residues 234–244 (PGPNVMLNQQN) the composition is skewed to low complexity. Over residues 275-287 (APGPIPAAVPGPG) the composition is skewed to pro residues. Low complexity predominate over residues 365 to 375 (YMGPPHQGPPM). Basic and acidic residues-rich tracts occupy residues 377 to 390 (HGHD…HDMR) and 420 to 433 (RGGR…TRPM). One copy of the 1-1; approximate repeat lies at 428 to 432 (METRP). Residues 428–466 (METRPMETEVLEPRGMERRMETCAMETRGMDARGLEMRG) are 8 X 5 AA tandem repeats of M-E-T-R-[AG]. One copy of the 1-2; approximate repeat lies at 433-437 (METEV). Residues 438 to 442 (LEPRG) form a 1-3; approximate repeat. A 1-4; approximate repeat occupies 443–446 (MERR). The 1-5; approximate repeat unit spans residues 447–451 (METCA). The 1-6 repeat unit spans residues 452–456 (METRG). The 1-7; approximate repeat unit spans residues 457 to 461 (MDARG). A 1-8; approximate repeat occupies 462-466 (LEMRG). The 2-1; approximate repeat unit spans residues 508–512 (GGTMQ). A 12 X 5 AA tandem repeats of G-[AT]-G-[MI]-Q region spans residues 508–565 (GGTMQGAGIQGGGMQGAGMQGGGMQGAGMQGGGMQGAGMQAGMQGASMQGGMQGAGMQ). The 2-2 repeat unit spans residues 513–517 (GAGIQ). A 2-3; approximate repeat occupies 518 to 522 (GGGMQ). Positions 519–543 (GGMQGAGMQGGGMQGAGMQGGGMQG) are enriched in gly residues. Positions 519 to 590 (GGMQGAGMQG…GQSQVTPQDQ (72 aa)) are disordered. Residues 523–527 (GAGMQ) form a 2-4 repeat. Residues 528-532 (GGGMQ) form a 2-5; approximate repeat. A 2-6 repeat occupies 533–537 (GAGMQ). The 2-7; approximate repeat unit spans residues 538–542 (GGGMQ). A 2-8 repeat occupies 543–547 (GAGMQ). The span at 544–557 (AGMQAGMQGASMQG) shows a compositional bias: low complexity. The 2-9; approximate repeat unit spans residues 548–551 (AGMQ). The 2-10; approximate repeat unit spans residues 552 to 556 (GASMQ). A 2-11; approximate repeat occupies 557 to 560 (GGMQ). A compositionally biased stretch (gly residues) spans 558 to 574 (GMQGAGMQGASKQGGGQ). The 2-12 repeat unit spans residues 561–565 (GAGMQ). The segment covering 575 to 584 (PSSFSPGQSQ) has biased composition (low complexity). Ser579 bears the Phosphoserine mark.

Expressed in testes, where it is restricted to pachytene spermatocytes and spermatids, and in the brain (at protein level).

It is found in the nucleus. Functionally, may play a significant role in AAUAAA-independent mRNA polyadenylation in germ cells. Directly involved in the binding to pre-mRNAs. In Mus musculus (Mouse), this protein is Cleavage stimulation factor subunit 2 tau variant (Cstf2t).